The sequence spans 616 residues: Glucoamylase P (616 aa).

The first 29 residues, 1–29 (MRLLPSSCAGALSLLCSLAIAAPTELKAR), serve as a signal peptide directing secretion. Position 149 (W149) interacts with substrate. Residue N200 is glycosylated (N-linked (GlcNAc...) asparagine). D205 acts as the Proton acceptor in catalysis. Catalysis depends on E208, which acts as the Proton donor. N427 is a glycosylation site (N-linked (GlcNAc...) asparagine). The region spanning 501–608 (VTSSCQVSIT…AVTTDDAWMG (108 aa)) is the CBM20 domain.

This sequence belongs to the glycosyl hydrolase 15 family.

It is found in the secreted. It catalyses the reaction Hydrolysis of terminal (1-&gt;4)-linked alpha-D-glucose residues successively from non-reducing ends of the chains with release of beta-D-glucose.. The sequence is that of Glucoamylase P (GAMP) from Amorphotheca resinae (Creosote fungus).